Consider the following 112-residue polypeptide: Putative pterin-4-alpha-carbinolamine dehydratase (112 aa).

Belongs to the pterin-4-alpha-carbinolamine dehydratase family.

The catalysed reaction is (4aS,6R)-4a-hydroxy-L-erythro-5,6,7,8-tetrahydrobiopterin = (6R)-L-erythro-6,7-dihydrobiopterin + H2O. This is Putative pterin-4-alpha-carbinolamine dehydratase from Shewanella amazonensis (strain ATCC BAA-1098 / SB2B).